A 426-amino-acid chain; its full sequence is Serine--tRNA ligase (426 aa).

233-235 (TAE) serves as a coordination point for L-serine. Residue 264-266 (RSE) coordinates ATP. L-serine is bound at residue E287. 351-354 (EISS) serves as a coordination point for ATP. S387 is a binding site for L-serine.

It belongs to the class-II aminoacyl-tRNA synthetase family. Type-1 seryl-tRNA synthetase subfamily. Homodimer. The tRNA molecule binds across the dimer.

The protein localises to the cytoplasm. The enzyme catalyses tRNA(Ser) + L-serine + ATP = L-seryl-tRNA(Ser) + AMP + diphosphate + H(+). The catalysed reaction is tRNA(Sec) + L-serine + ATP = L-seryl-tRNA(Sec) + AMP + diphosphate + H(+). The protein operates within aminoacyl-tRNA biosynthesis; selenocysteinyl-tRNA(Sec) biosynthesis; L-seryl-tRNA(Sec) from L-serine and tRNA(Sec): step 1/1. Catalyzes the attachment of serine to tRNA(Ser). Is also able to aminoacylate tRNA(Sec) with serine, to form the misacylated tRNA L-seryl-tRNA(Sec), which will be further converted into selenocysteinyl-tRNA(Sec). This is Serine--tRNA ligase from Pseudomonas paraeruginosa (strain DSM 24068 / PA7) (Pseudomonas aeruginosa (strain PA7)).